The following is a 264-amino-acid chain: Nuclear egress protein 1 (264 aa).

Over residues 1 to 12 (MTVHKNRFRRSR) the composition is skewed to basic residues. The segment at 1–22 (MTVHKNRFRRSRSLSVTHRIQK) is disordered. Residues 83–187 (CLEFSPYANE…HIVFQSRTLH (105 aa)) form a CCCH-type zinc finger.

The protein belongs to the herpesviridae NEC1 protein family. In terms of assembly, forms a heterohexameric complex with NEC2. Interacts with capsid vertex specific component 2/CVC2; this interaction directs the capsid to the host inner nuclear membrane to initiate budding. Post-translationally, phosphorylated at serine residues in the N-terminus. This phosphorylation regulates the localization within the inner nuclear membrane.

The protein resides in the host nucleus inner membrane. In terms of biological role, plays an essential role in virion nuclear egress, the first step of virion release from infected cell. Within the host nucleus, NEC1 interacts with the newly formed capsid through the vertexes and directs it to the inner nuclear membrane by associating with NEC2. Induces the budding of the capsid at the inner nuclear membrane as well as its envelopment into the perinuclear space. There, the NEC1/NEC2 complex promotes the fusion of the enveloped capsid with the outer nuclear membrane and the subsequent release of the viral capsid into the cytoplasm where it will reach the secondary budding sites in the host Golgi or trans-Golgi network. The sequence is that of Nuclear egress protein 1 from Human herpesvirus 6B (HHV-6 variant B).